The chain runs to 372 residues: Pyrimidine monooxygenase RutA (372 aa).

FMN is bound by residues 57–58, N123, E132, 148–149, and S198; these read IK and RY.

Belongs to the NtaA/SnaA/DszA monooxygenase family. RutA subfamily.

It carries out the reaction uracil + FMNH2 + NADH + O2 = (Z)-3-ureidoacrylate + FMN + NAD(+) + H2O + H(+). The catalysed reaction is thymine + FMNH2 + NADH + O2 = (Z)-2-methylureidoacrylate + FMN + NAD(+) + H2O + H(+). Functionally, catalyzes the pyrimidine ring opening between N-3 and C-4 by an unusual flavin hydroperoxide-catalyzed mechanism, adding oxygen atoms in the process to yield ureidoacrylate peracid, that immediately reacts with FMN forming ureidoacrylate and FMN-N(5)-oxide. The FMN-N(5)-oxide reacts spontaneously with NADH to produce FMN. Requires the flavin reductase RutF to regenerate FMN in vivo. This Methylorubrum extorquens (strain PA1) (Methylobacterium extorquens) protein is Pyrimidine monooxygenase RutA.